The chain runs to 397 residues: Acetate kinase (397 aa).

Asparagine 8 serves as a coordination point for Mg(2+). An ATP-binding site is contributed by lysine 15. Arginine 89 contributes to the substrate binding site. The active-site Proton donor/acceptor is the aspartate 146. ATP contacts are provided by residues 206 to 210, 281 to 283, and 329 to 333; these read HLGNG, DLR, and GVGEN. Glutamate 382 lines the Mg(2+) pocket.

Belongs to the acetokinase family. As to quaternary structure, homodimer. It depends on Mg(2+) as a cofactor. The cofactor is Mn(2+).

The protein resides in the cytoplasm. It catalyses the reaction acetate + ATP = acetyl phosphate + ADP. The protein operates within metabolic intermediate biosynthesis; acetyl-CoA biosynthesis; acetyl-CoA from acetate: step 1/2. Catalyzes the formation of acetyl phosphate from acetate and ATP. Can also catalyze the reverse reaction. The chain is Acetate kinase from Bacillus anthracis.